Reading from the N-terminus, the 317-residue chain is Small glutamine-rich tetratricopeptide repeat-containing protein 2 (317 aa).

4 TPR repeats span residues L14–E48, A83–S116, V118–H150, and A151–N184. The span at L198–T215 shows a compositional bias: polar residues. Disordered stretches follow at residues L198–G224 and M298–Q317.

Belongs to the SGT family.

The protein localises to the cytoplasm. It localises to the nucleus. In terms of biological role, co-chaperone that binds to the molecular chaperone Hsp70 and regulates Hsp70 ATPase activity. This chain is Small glutamine-rich tetratricopeptide repeat-containing protein 2 (sgt2), found in Schizosaccharomyces pombe (strain 972 / ATCC 24843) (Fission yeast).